The following is a 700-amino-acid chain: Protein kinase C, eye isozyme (700 aa).

2 Phorbol-ester/DAG-type zinc fingers span residues 71 to 121 (GHRF…VFKC) and 136 to 186 (KHGW…PPMC). In terms of domain architecture, C2 spans 189–310 (DISEVRGKLL…LQKEPVDGWY (122 aa)). Positions 222, 228, 281, 283, 286, and 289 each coordinate Ca(2+). Positions 371–629 (FNFVKVIGKG…RQEITTHPFF (259 aa)) constitute a Protein kinase domain. ATP-binding positions include 377–385 (IGKGSFGKV) and Lys-400. Asp-495 (proton acceptor) is an active-site residue. Residues 630 to 700 (RNVDWDKAEA…FMNPEFITII (71 aa)) form the AGC-kinase C-terminal domain.

Belongs to the protein kinase superfamily. AGC Ser/Thr protein kinase family. PKC subfamily. It depends on Ca(2+) as a cofactor. As to expression, exclusively expressed in photoreceptor cells.

The catalysed reaction is L-seryl-[protein] + ATP = O-phospho-L-seryl-[protein] + ADP + H(+). It carries out the reaction L-threonyl-[protein] + ATP = O-phospho-L-threonyl-[protein] + ADP + H(+). This is a calcium-activated, phospholipid-dependent, serine- and threonine-specific enzyme. This isozyme is a negative regulator of the visual transduction cascade and has been shown to be required for photoreceptor cell inactivation and light adaptation. Negative regulation is dependent on interaction with scaffolding protein inaD. Acts in a hh-signaling pathway which regulates the Duox-dependent gut immune response to bacterial uracil; required for the activation of Cad99C and consequently Cad99C-dependent endosome formation, which is essential for the Duox-dependent production of reactive oxygen species (ROS) in response to intestinal bacterial infection. This chain is Protein kinase C, eye isozyme (inaC), found in Drosophila melanogaster (Fruit fly).